The sequence spans 156 residues: 6,7-dimethyl-8-ribityllumazine synthase (156 aa).

5-amino-6-(D-ribitylamino)uracil-binding positions include phenylalanine 23, 57-59, and 81-83; these read AFE and AVI. Residue 86–87 coordinates (2S)-2-hydroxy-3-oxobutyl phosphate; that stretch reads ST. The active-site Proton donor is the histidine 89. 5-amino-6-(D-ribitylamino)uracil is bound at residue phenylalanine 114. (2S)-2-hydroxy-3-oxobutyl phosphate is bound at residue arginine 128.

Belongs to the DMRL synthase family.

The catalysed reaction is (2S)-2-hydroxy-3-oxobutyl phosphate + 5-amino-6-(D-ribitylamino)uracil = 6,7-dimethyl-8-(1-D-ribityl)lumazine + phosphate + 2 H2O + H(+). The protein operates within cofactor biosynthesis; riboflavin biosynthesis; riboflavin from 2-hydroxy-3-oxobutyl phosphate and 5-amino-6-(D-ribitylamino)uracil: step 1/2. In terms of biological role, catalyzes the formation of 6,7-dimethyl-8-ribityllumazine by condensation of 5-amino-6-(D-ribitylamino)uracil with 3,4-dihydroxy-2-butanone 4-phosphate. This is the penultimate step in the biosynthesis of riboflavin. The polypeptide is 6,7-dimethyl-8-ribityllumazine synthase (Sulfurospirillum multivorans (Dehalospirillum multivorans)).